The chain runs to 264 residues: Cercarial protease (264 aa).

The first 19 residues, 1–19, serve as a signal peptide directing secretion; the sequence is MSNRWRFVVVVTLFTYCLT. The propeptide occupies 20-27; the sequence is FERVSTWL. Residues 28 to 264 enclose the Peptidase S1 domain; sequence IRSGEPVQHP…RMLDFVRSNI (237 aa). A disulfide bridge links Cys-53 with Cys-69. Residues His-68 and Asp-126 each act as charge relay system in the active site. Residues Cys-192 and Cys-202 are joined by a disulfide bond. Catalysis depends on Ser-218, which acts as the Charge relay system.

It belongs to the peptidase S1 family. Acetabular (penetration) glands.

Activated by an autocatalytic mechanism. Its function is as follows. This protease cleaves elastin and thus facilitates penetration of schistosome parasite larvae through elastin-rich tissue of the host. This chain is Cercarial protease, found in Schistosoma mansoni (Blood fluke).